Consider the following 117-residue polypeptide: Protein RALF-like 27 (117 aa).

Residues 1–27 (MTKTFFSFSFFFTSSLLLLLAATSATA) form the signal peptide. A propeptide spans 28-71 (STGNVTSGLRYDGCAPGDTVGECITATVEEEDEEGVEAVVRRIL) (removed in mature form). An N-linked (GlcNAc...) asparagine glycan is attached at asparagine 31. Disulfide bonds link cysteine 88–cysteine 96 and cysteine 107–cysteine 113.

The protein belongs to the plant rapid alkalinization factor (RALF) family.

Its subcellular location is the secreted. Functionally, cell signaling peptide that may regulate plant stress, growth, and development. Mediates a rapid alkalinization of extracellular space by mediating a transient increase in the cytoplasmic Ca(2+) concentration leading to a calcium-dependent signaling events through a cell surface receptor and a concomitant activation of some intracellular mitogen-activated protein kinases. In Arabidopsis thaliana (Mouse-ear cress), this protein is Protein RALF-like 27 (RALFL27).